Here is a 158-residue protein sequence, read N- to C-terminus: uncharacterized protein (158 aa).

Transmembrane regions (helical) follow at residues 45–65, 76–96, and 106–126; these read GIFFQVVGAILVFGAYLPAVI, LAIGMWIISIAGLGLLAIFAW, and FILVALSETLSCIASIIVFAL.

This sequence to U.parvum UU007, UU041 and UU042.

It is found in the cell membrane. This is an uncharacterized protein from Ureaplasma parvum serovar 3 (strain ATCC 700970).